The chain runs to 330 residues: 1,8-cineole synthase (330 aa).

Aspartate 81 is a Mg(2+) binding site. A DDXXD motif motif is present at residues aspartate 81 to aspartate 85. Residue arginine 174 participates in substrate binding. Mg(2+) is bound by residues asparagine 220 and serine 224. The short motif at asparagine 220–glutamate 228 is the NXXXSXXXE motif element. Substrate is bound at residue lysine 227. Residue glutamate 228 participates in Mg(2+) binding. Residue arginine 314–tyrosine 315 coordinates substrate.

The protein belongs to the terpene synthase family. In terms of assembly, homodimer. It depends on Mg(2+) as a cofactor.

It catalyses the reaction (2E)-geranyl diphosphate + H2O = 1,8-cineole + diphosphate. It carries out the reaction neryl diphosphate + H2O = 1,8-cineole + diphosphate. In vitro, catalyzes the formation of 1,8-cineole from geranyl diphosphate (GPP). Can also accept neryl diphosphate (NPP) as substrate to produce 1,8-cineole. This is 1,8-cineole synthase from Streptomyces clavuligerus.